The following is a 600-amino-acid chain: Chaperonin 60 subunit beta 1, chloroplastic (600 aa).

Positions 1 to 12 (MASTFTATSSIG) are enriched in polar residues. Residues 1–23 (MASTFTATSSIGSMVAPNGHKSD) form a disordered region. Residues 1-54 (MASTFTATSSIGSMVAPNGHKSDKKLISKLSSSSFGRRQSVCPRPRRSSSAIVC) constitute a chloroplast transit peptide. Phosphoserine is present on residues serine 101 and serine 478.

It belongs to the chaperonin (HSP60) family. As to quaternary structure, part of the Cpn60 complex composed of 7 alpha and 7 beta subunits. Can also form a complex composed of 14 beta subunits only. Both complexes show ATPase activity. The Cpn60 complex interacts with the Cpn10 complex. Interacts with RAB during heat stress. As to expression, expressed in leaves, stems, petioles and flowers.

Its subcellular location is the plastid. The protein resides in the chloroplast stroma. Binds RuBisCO small and large subunits and is implicated in the assembly of the enzyme oligomer. Involved in protein assisted folding. Required for proper plastid division. This is Chaperonin 60 subunit beta 1, chloroplastic (CPN60B1) from Arabidopsis thaliana (Mouse-ear cress).